Consider the following 207-residue polypeptide: 2,3-bisphosphoglycerate-dependent phosphoglycerate mutase (207 aa).

Substrate contacts are provided by residues 10–17, 23–24, Arg62, 89–92, Lys100, 116–117, and 160–161; these read RHGQSEWN, TG, ERDY, RR, and GN. His11 functions as the Tele-phosphohistidine intermediate in the catalytic mechanism. Glu89 functions as the Proton donor/acceptor in the catalytic mechanism.

Belongs to the phosphoglycerate mutase family. BPG-dependent PGAM subfamily. In terms of assembly, homodimer.

The catalysed reaction is (2R)-2-phosphoglycerate = (2R)-3-phosphoglycerate. It participates in carbohydrate degradation; glycolysis; pyruvate from D-glyceraldehyde 3-phosphate: step 3/5. Functionally, catalyzes the interconversion of 2-phosphoglycerate and 3-phosphoglycerate. This Rhodopseudomonas palustris (strain BisB18) protein is 2,3-bisphosphoglycerate-dependent phosphoglycerate mutase.